The following is a 428-amino-acid chain: Glutamate-1-semialdehyde 2,1-aminomutase (428 aa).

Residue Lys-267 is modified to N6-(pyridoxal phosphate)lysine.

It belongs to the class-III pyridoxal-phosphate-dependent aminotransferase family. HemL subfamily. As to quaternary structure, homodimer. Requires pyridoxal 5'-phosphate as cofactor.

It localises to the cytoplasm. The enzyme catalyses (S)-4-amino-5-oxopentanoate = 5-aminolevulinate. Its pathway is porphyrin-containing compound metabolism; protoporphyrin-IX biosynthesis; 5-aminolevulinate from L-glutamyl-tRNA(Glu): step 2/2. It participates in porphyrin-containing compound metabolism; chlorophyll biosynthesis. In Prochlorococcus marinus (strain NATL1A), this protein is Glutamate-1-semialdehyde 2,1-aminomutase.